The sequence spans 158 residues: Large ribosomal subunit protein bL19 (158 aa).

A compositionally biased stretch (basic and acidic residues) spans 119–129 (SDRSRVMKDAA). The interval 119–158 (SDRSRVMKDAARAQQARDAAQGNSSSETQSSTAAVETQGE) is disordered. A compositionally biased stretch (low complexity) spans 130–139 (RAQQARDAAQ). A compositionally biased stretch (polar residues) spans 140–158 (GNSSSETQSSTAAVETQGE).

This sequence belongs to the bacterial ribosomal protein bL19 family.

In terms of biological role, this protein is located at the 30S-50S ribosomal subunit interface and may play a role in the structure and function of the aminoacyl-tRNA binding site. This chain is Large ribosomal subunit protein bL19, found in Deinococcus geothermalis (strain DSM 11300 / CIP 105573 / AG-3a).